Here is a 269-residue protein sequence, read N- to C-terminus: Acyl-CoA-binding domain-containing protein 4 (269 aa).

Residues 12-101 form the ACB domain; that stretch reads CQKQFQAAVS…MKLVAQKVID (90 aa). An acyl-CoA-binding positions include 23–32, 43–47, Lys69, and Tyr88; these read IQNLPKNGSY and YSYYK. Disordered stretches follow at residues 150–175, 195–226, and 248–269; these read GAVS…PRDL, EQRA…QCSA, and VALP…SAAN. Pro residues predominate over residues 156–167; it reads PCLPKEPAPPSP. A phosphoserine mark is found at Ser166 and Ser171.

In terms of biological role, binds medium- and long-chain acyl-CoA esters and may function as an intracellular carrier of acyl-CoA esters. This chain is Acyl-CoA-binding domain-containing protein 4 (ACBD4), found in Pongo abelii (Sumatran orangutan).